The sequence spans 191 residues: Fe/S biogenesis protein NfuA (191 aa).

[4Fe-4S] cluster contacts are provided by C149 and C152.

Belongs to the NfuA family. In terms of assembly, homodimer. The cofactor is [4Fe-4S] cluster.

Involved in iron-sulfur cluster biogenesis. Binds a 4Fe-4S cluster, can transfer this cluster to apoproteins, and thereby intervenes in the maturation of Fe/S proteins. Could also act as a scaffold/chaperone for damaged Fe/S proteins. The sequence is that of Fe/S biogenesis protein NfuA from Escherichia coli O7:K1 (strain IAI39 / ExPEC).